The primary structure comprises 196 residues: Probable malonic semialdehyde reductase RutE (196 aa).

It belongs to the nitroreductase family. HadB/RutE subfamily. It depends on FMN as a cofactor.

It catalyses the reaction 3-hydroxypropanoate + NADP(+) = 3-oxopropanoate + NADPH + H(+). Its function is as follows. May reduce toxic product malonic semialdehyde to 3-hydroxypropionic acid, which is excreted. The polypeptide is Probable malonic semialdehyde reductase RutE (Escherichia coli O157:H7).